An 860-amino-acid polypeptide reads, in one-letter code: Valine--tRNA ligase (860 aa).

Positions 53–63 match the 'HIGH' region motif; it reads PNLTGILHIGH. Positions 527–531 match the 'KMSKS' region motif; that stretch reads KMSKS. K530 contacts ATP. The stretch at 794 to 860 forms a coiled coil; the sequence is QDKTKIVDKL…LKQDKLNSLK (67 aa).

Belongs to the class-I aminoacyl-tRNA synthetase family. ValS type 1 subfamily. In terms of assembly, monomer.

The protein localises to the cytoplasm. The enzyme catalyses tRNA(Val) + L-valine + ATP = L-valyl-tRNA(Val) + AMP + diphosphate. Functionally, catalyzes the attachment of valine to tRNA(Val). As ValRS can inadvertently accommodate and process structurally similar amino acids such as threonine, to avoid such errors, it has a 'posttransfer' editing activity that hydrolyzes mischarged Thr-tRNA(Val) in a tRNA-dependent manner. This chain is Valine--tRNA ligase, found in Mycoplasmoides gallisepticum (strain R(low / passage 15 / clone 2)) (Mycoplasma gallisepticum).